Reading from the N-terminus, the 122-residue chain is EPIDERMAL PATTERNING FACTOR-like protein 1 (122 aa).

An N-terminal signal peptide occupies residues 1–26 (MFAIYKSTLLLLPLILILLITPQVSS). 3 disulfide bridges follow: cysteine 55-cysteine 113, cysteine 59-cysteine 65, and cysteine 62-cysteine 115.

This sequence belongs to the plant cysteine rich small secretory peptide family. Epidermal patterning factor subfamily.

The protein resides in the secreted. In terms of biological role, controls stomatal patterning. The protein is EPIDERMAL PATTERNING FACTOR-like protein 1 of Arabidopsis thaliana (Mouse-ear cress).